A 525-amino-acid chain; its full sequence is MSL complex subunit 3 (525 aa).

Residues 13 to 72 enclose the Tudor-knot domain; the sequence is SGEKVLCFEPDPTKARVLYDAKIIDVIIGKDEKGRKIPEYLIHFNGWNRSWDRWAAEEHV. 2 disordered regions span residues 119–148 and 302–383; these read KEKSKNDENSVSSTCHESCGEKNGGIKEHR and TTTT…DTSA. Residues 136–146 show a composition bias toward basic and acidic residues; the sequence is SCGEKNGGIKE. Residues 172–521 enclose the MRG domain; it reads DERTITIDIP…CEAHYSTKNP (350 aa). A required for the histone acetyltransferase activity of the MSL complex region spans residues 294-444; it reads FFLPIKESTT…WKLVPDNYPP (151 aa). 2 positions are modified to phosphoserine: Ser313 and Ser315. The segment covering 320-332 has biased composition (low complexity); that stretch reads NPSTPQSTESQPP. Ser371 and Ser404 each carry phosphoserine. Thr409 is subject to Phosphothreonine. Phosphoserine is present on residues Ser411 and Ser415.

In terms of assembly, component of the MSL histone acetyltransferase complex at least composed of the KAT8/MOF, MSL1/hampin, MSL2 and MSL3. Interacts (via the MRG domain) with MSL1 and KAT8/MOF. In terms of tissue distribution, in testis, expression is mostly restricted to the spermatocyte stage and only in a small portion of spermatogonia.

It localises to the nucleus. Its function is as follows. Non-catalytic component of the MSL histone acetyltransferase complex, a multiprotein complex that mediates the majority of histone H4 acetylation at 'Lys-16' (H4K16ac), an epigenetic mark that prevents chromatin compaction. The MSL complex is required for chromosome stability and genome integrity by maintaining homeostatic levels of H4K16ac. The MSL complex is also involved in gene dosage by promoting up-regulation of genes expressed by the X chromosome. X up-regulation is required to compensate for autosomal biallelic expression. The MSL complex also participates in gene dosage compensation by promoting expression of Tsix non-coding RNA. Acts as a histone reader that specifically recognizes and binds histone H4 monomethylated at 'Lys-20' (H4K20Me1) in a DNA-dependent manner and is proposed to be involved in chromosomal targeting of the MSL complex. May play a role X inactivation in females. This chain is MSL complex subunit 3, found in Mus musculus (Mouse).